Consider the following 418-residue polypeptide: MLHPRARTMLLLSLPAVAIGIASSLILIVVMKIASALQNLLWQRLPGTLGIAQDSPLWIIGVLTLTGIAVGLVIRFSQGHAGPDPACEPLIGAPVPPSALPGLIVALILGLAGGVSLGPEHPIMTVNIALAVAIGARLLPRVNRMEWTILASAGTIGALFGTPVAAALIFSQTLNGSSEVPLWDRLFAPLMAAAAGALTTGLFFHPHFSLPITHYGQMEMTDILSGAIVAAIAIAAGMVAVWCLPRLHAMMNQMKNPVLVLGIGGFILGILGVIGGPVSLFKGLDEMQQMVANQAFSTSDYFLLAVIKLAALVVAAASGFRGGRIFPAVFVGVALGLMLHEHVPAVPAAITVSCAILGIVLVVTRDGWLSLFMAAVVVPNTTLLPLLCIVMLPAWLLLAGKPMMMVNRPKQQPPHDNV.

A run of 12 helical transmembrane segments spans residues 10 to 30 (LLLSLPAVAIGIASSLILIVV), 54 to 74 (DSPLWIIGVLTLTGIAVGLVI), 99 to 119 (ALPGLIVALILGLAGGVSLGP), 120 to 140 (EHPIMTVNIALAVAIGARLLP), 149 to 169 (ILASAGTIGALFGTPVAAALI), 186 to 206 (LFAPLMAAAAGALTTGLFFHP), 223 to 243 (ILSGAIVAAIAIAAGMVAVWC), 258 to 278 (VLVLGIGGFILGILGVIGGPV), 300 to 320 (DYFLLAVIKLAALVVAAASGF), 322 to 342 (GGRIFPAVFVGVALGLMLHEH), 343 to 363 (VPAVPAAITVSCAILGIVLVV), and 371 to 391 (LFMAAVVVPNTTLLPLLCIVM).

This sequence belongs to the chloride channel (TC 2.A.49) family.

It is found in the cell membrane. This is Putative ion-transport protein YfeO from Escherichia coli O139:H28 (strain E24377A / ETEC).